The chain runs to 200 residues: Recombination protein RecR (200 aa).

The C4-type zinc finger occupies cysteine 57 to cysteine 72. Residues arginine 81–proline 176 enclose the Toprim domain.

It belongs to the RecR family.

In terms of biological role, may play a role in DNA repair. It seems to be involved in an RecBC-independent recombinational process of DNA repair. It may act with RecF and RecO. The protein is Recombination protein RecR of Mannheimia succiniciproducens (strain KCTC 0769BP / MBEL55E).